The chain runs to 363 residues: tRNA(Met) cytidine acetate ligase (363 aa).

ATP contacts are provided by residues 7–20, Gly96, Asn152, and Arg175; that span reads IAEF…HKYL.

This sequence belongs to the TmcAL family.

The protein resides in the cytoplasm. The catalysed reaction is cytidine(34) in elongator tRNA(Met) + acetate + ATP = N(4)-acetylcytidine(34) in elongator tRNA(Met) + AMP + diphosphate. In terms of biological role, catalyzes the formation of N(4)-acetylcytidine (ac(4)C) at the wobble position of elongator tRNA(Met), using acetate and ATP as substrates. First activates an acetate ion to form acetyladenylate (Ac-AMP) and then transfers the acetyl group to tRNA to form ac(4)C34. In Streptococcus thermophilus (strain CNRZ 1066), this protein is tRNA(Met) cytidine acetate ligase.